The sequence spans 278 residues: Type II restriction enzyme AgeI (278 aa).

Belongs to the BsaWI type II restriction endonuclease family.

It carries out the reaction Endonucleolytic cleavage of DNA to give specific double-stranded fragments with terminal 5'-phosphates.. A P subtype restriction enzyme that recognizes the double-stranded sequence 5'-ACCGGT-3' and cleaves after A-1. In Thalassovita gelatinovora (Thalassobius gelatinovorus), this protein is Type II restriction enzyme AgeI (ageIR).